The following is a 380-amino-acid chain: Cytochrome b (380 aa).

Transmembrane regions (helical) follow at residues 33 to 53, 77 to 98, 113 to 133, and 178 to 198; these read LGSLLGTCLVLQIVTGLFLAM, WVIRYLHANGASMFFICLFLHI, WNIGIILLLATMATAFMGYVL, and FFTFHFILPFIITALVALHLL. Heme b contacts are provided by histidine 83 and histidine 97. Histidine 182 and histidine 196 together coordinate heme b. Histidine 201 contributes to the a ubiquinone binding site. Transmembrane regions (helical) follow at residues 226 to 246, 288 to 308, 320 to 340, and 347 to 367; these read TKDILGLFLLLLTLMSLVLFS, LGGVLALLLSILILMTIPMLH, LSQLTYWLWAANLLTLTWIGG, and FITIGQVTSVLYFITILILVP.

Belongs to the cytochrome b family. As to quaternary structure, the cytochrome bc1 complex contains 11 subunits: 3 respiratory subunits (MT-CYB, CYC1 and UQCRFS1), 2 core proteins (UQCRC1 and UQCRC2) and 6 low-molecular weight proteins (UQCRH/QCR6, UQCRB/QCR7, UQCRQ/QCR8, UQCR10/QCR9, UQCR11/QCR10 and a cleavage product of UQCRFS1). This cytochrome bc1 complex then forms a dimer. Heme b is required as a cofactor.

Its subcellular location is the mitochondrion inner membrane. Component of the ubiquinol-cytochrome c reductase complex (complex III or cytochrome b-c1 complex) that is part of the mitochondrial respiratory chain. The b-c1 complex mediates electron transfer from ubiquinol to cytochrome c. Contributes to the generation of a proton gradient across the mitochondrial membrane that is then used for ATP synthesis. The polypeptide is Cytochrome b (MT-CYB) (Nomascus leucogenys (Northern white-cheeked gibbon)).